Consider the following 56-residue polypeptide: uncharacterized protein (56 aa).

Residues 21–38 (HTHTPHPHHTHTHTHHTP) are compositionally biased toward basic residues. Residues 21–40 (HTHTPHPHHTHTHTHHTPTH) form a disordered region.

This is an uncharacterized protein from Saccharomyces cerevisiae (strain ATCC 204508 / S288c) (Baker's yeast).